Here is a 193-residue protein sequence, read N- to C-terminus: Thymidine kinase (193 aa).

ATP is bound by residues 16 to 23 and 89 to 92; these read GPMFSGKS and DEIQ. Residue Glu90 is the Proton acceptor of the active site. Residues Cys146, Cys149, Cys184, and Cys187 each contribute to the Zn(2+) site.

The protein belongs to the thymidine kinase family. Homotetramer.

The protein localises to the cytoplasm. It carries out the reaction thymidine + ATP = dTMP + ADP + H(+). This is Thymidine kinase from Thermoanaerobacter pseudethanolicus (strain ATCC 33223 / 39E) (Clostridium thermohydrosulfuricum).